Reading from the N-terminus, the 479-residue chain is UDP-N-acetylmuramate--L-alanine ligase (479 aa).

128–134 (GAHGKTT) contacts ATP.

It belongs to the MurCDEF family.

Its subcellular location is the cytoplasm. It carries out the reaction UDP-N-acetyl-alpha-D-muramate + L-alanine + ATP = UDP-N-acetyl-alpha-D-muramoyl-L-alanine + ADP + phosphate + H(+). It functions in the pathway cell wall biogenesis; peptidoglycan biosynthesis. Cell wall formation. This is UDP-N-acetylmuramate--L-alanine ligase from Psychrobacter cryohalolentis (strain ATCC BAA-1226 / DSM 17306 / VKM B-2378 / K5).